The primary structure comprises 78 residues: Acyl carrier protein (78 aa).

The Carrier domain maps to 2–77 (SEIASRVKAI…DAVSYIEEHA (76 aa)). Ser-37 bears the O-(pantetheine 4'-phosphoryl)serine mark.

This sequence belongs to the acyl carrier protein (ACP) family. 4'-phosphopantetheine is transferred from CoA to a specific serine of apo-ACP by AcpS. This modification is essential for activity because fatty acids are bound in thioester linkage to the sulfhydryl of the prosthetic group.

Its subcellular location is the cytoplasm. Its pathway is lipid metabolism; fatty acid biosynthesis. Functionally, carrier of the growing fatty acid chain in fatty acid biosynthesis. The chain is Acyl carrier protein from Bacteroides thetaiotaomicron (strain ATCC 29148 / DSM 2079 / JCM 5827 / CCUG 10774 / NCTC 10582 / VPI-5482 / E50).